The sequence spans 364 residues: Tyrosyl-DNA phosphodiesterase 2 (364 aa).

M1 is modified (N-acetylmethionine). Over residues M1–G10 the composition is skewed to low complexity. A disordered region spans residues M1–E21. Residue K23 forms a Glycyl lysine isopeptide (Lys-Gly) (interchain with G-Cter in SUMO2) linkage. Positions E68 to V108 are disordered. A phosphothreonine; by ACVR1B mark is found at T88 and T92. Phosphoserine is present on S95. Positions N122–L126 are interaction with 5' end of substrate DNA. Residues D124 and E154 each coordinate Mg(2+). An interaction with 5' end of substrate DNA region spans residues H228–R233. Catalysis depends on D264, which acts as the Proton donor/acceptor. The interval N266–R268 is interaction with 5' end of substrate DNA.

This sequence belongs to the CCR4/nocturin family. As to quaternary structure, interacts with TRAF2, TRAF3, TRAF5, TRAF6, TNFRSF8/CD30, TNFRSF5/CD40, TNFRSF1B/TNF-R75, ETS1, ETS2, FLI1, SMAD3 and ACVR1B/ALK4. It depends on Mg(2+) as a cofactor. The cofactor is Mn(2+). Post-translationally, ubiquitinated by TRAF6.

The protein resides in the nucleus. It localises to the PML body. It is found in the nucleolus. The protein localises to the cytoplasm. DNA repair enzyme that can remove a variety of covalent adducts from DNA through hydrolysis of a 5'-phosphodiester bond, giving rise to DNA with a free 5' phosphate. Catalyzes the hydrolysis of dead-end complexes between DNA and the topoisomerase 2 (TOP2) active site tyrosine residue. The 5'-tyrosyl DNA phosphodiesterase activity can enable the repair of TOP2-induced DNA double-strand breaks/DSBs without the need for nuclease activity, creating a 'clean' DSB with 5'-phosphate termini that are ready for ligation. Thereby, protects the transcription of many genes involved in neurological development and maintenance from the abortive activity of TOP2. Hydrolyzes 5'-phosphoglycolates on protruding 5' ends on DSBs due to DNA damage by radiation and free radicals. Has preference for single-stranded DNA or duplex DNA with a 4 base pair overhang as substrate. Also has 3'-tyrosyl DNA phosphodiesterase activity, but less efficiently and much slower than TDP1. Constitutes the major if not only 5'-tyrosyl-DNA phosphodiesterase in cells. Also acts as an adapter by participating in the specific activation of MAP3K7/TAK1 in response to TGF-beta: associates with components of the TGF-beta receptor-TRAF6-TAK1 signaling module and promotes their ubiquitination dependent complex formation. Involved in non-canonical TGF-beta induced signaling routes. May also act as a negative regulator of ETS1 and may inhibit NF-kappa-B activation. Acts as a regulator of ribosome biogenesis following stress. This chain is Tyrosyl-DNA phosphodiesterase 2 (TDP2), found in Bos taurus (Bovine).